Consider the following 517-residue polypeptide: Putative lipase ATG15 (517 aa).

The Cytoplasmic portion of the chain corresponds to 1–6 (MRASTH). Residues 7 to 27 (SWLLLVVVLSLSSFTVNAVIL) form a helical; Signal-anchor for type II membrane protein membrane-spanning segment. The Lumenal portion of the chain corresponds to 28–517 (EGLIPPRSHL…TNWHFTDETL (490 aa)). N-linked (GlcNAc...) asparagine glycans are attached at residues N187, N221, and N303. S319 functions as the Charge relay system in the catalytic mechanism. The interval 466 to 499 (GWRWPWHRGDSADDDGDSDEDTDEDDKLAVPKAR) is disordered. Positions 477–491 (ADDDGDSDEDTDEDD) are enriched in acidic residues.

Belongs to the AB hydrolase superfamily. Lipase family. In terms of assembly, binds to both phosphatidylinositol (PI) and phosphatidylinositol 3,5-bisphosphate (PIP2).

Its subcellular location is the endosome. It localises to the multivesicular body membrane. The protein resides in the prevacuolar compartment membrane. The catalysed reaction is a triacylglycerol + H2O = a diacylglycerol + a fatty acid + H(+). In terms of biological role, lipase which is essential for lysis of subvacuolar cytoplasm to vacuole targeted bodies and intravacuolar autophagic bodies. Involved in the lysis of intravacuolar multivesicular body (MVB) vesicles. The intravacuolar membrane disintegration by ATG15 is critical to life span extension. This Mycosarcoma maydis (Corn smut fungus) protein is Putative lipase ATG15 (ATG15).